A 303-amino-acid polypeptide reads, in one-letter code: UDP-N-acetylenolpyruvoylglucosamine reductase (303 aa).

An FAD-binding PCMH-type domain is found at 29–196 (KIGGPADILI…LEAVLQLEQK (168 aa)). The active site involves R174. The active-site Proton donor is S225. The active site involves E295.

This sequence belongs to the MurB family. FAD serves as cofactor.

It is found in the cytoplasm. It carries out the reaction UDP-N-acetyl-alpha-D-muramate + NADP(+) = UDP-N-acetyl-3-O-(1-carboxyvinyl)-alpha-D-glucosamine + NADPH + H(+). Its pathway is cell wall biogenesis; peptidoglycan biosynthesis. Its function is as follows. Cell wall formation. The polypeptide is UDP-N-acetylenolpyruvoylglucosamine reductase (Bacillus velezensis (strain DSM 23117 / BGSC 10A6 / LMG 26770 / FZB42) (Bacillus amyloliquefaciens subsp. plantarum)).